Reading from the N-terminus, the 313-residue chain is Metal ABC transporter substrate-binding lipoprotein (313 aa).

The signal sequence occupies residues 1–23; the sequence is MIEKYKNILITFIALAAIVFLVG. Residue C24 is the site of N-palmitoyl cysteine attachment. C24 carries the S-diacylglycerol cysteine lipid modification. The Zn(2+) site is built by H71, H143, E209, and D284.

Belongs to the bacterial solute-binding protein 9 family. Lipoprotein receptor antigen (Lrai) subfamily.

It is found in the cell membrane. Functionally, part of an ATP-driven transport system for a metal; probably for manganese. This is Metal ABC transporter substrate-binding lipoprotein (mtsA) from Lactococcus lactis subsp. lactis (strain IL1403) (Streptococcus lactis).